A 138-amino-acid polypeptide reads, in one-letter code: Small ribosomal subunit protein uS11B (138 aa).

The interval 118 to 138 (DVTPVPSDSTRKKGGRRGRRL) is disordered. Positions 129 to 138 (KKGGRRGRRL) are enriched in basic residues.

The protein belongs to the universal ribosomal protein uS11 family. Component of the small ribosomal subunit (SSU). Mature yeast ribosomes consist of a small (40S) and a large (60S) subunit. The 40S small subunit contains 1 molecule of ribosomal RNA (18S rRNA) and 33 different proteins (encoded by 57 genes). The large 60S subunit contains 3 rRNA molecules (25S, 5.8S and 5S rRNA) and 46 different proteins (encoded by 81 genes). uS11 interacts with eS1 forming part of the mRNA exit tunnel. uS11 interacts with snoRNA U3. uS11 interacts with MPP10. Component of the ribosomal small subunit (SSU) processome composed of at least 40 protein subunits and snoRNA U3.

The protein resides in the cytoplasm. It is found in the nucleus. It localises to the nucleolus. In terms of biological role, component of the ribosome, a large ribonucleoprotein complex responsible for the synthesis of proteins in the cell. The small ribosomal subunit (SSU) binds messenger RNAs (mRNAs) and translates the encoded message by selecting cognate aminoacyl-transfer RNA (tRNA) molecules. The large subunit (LSU) contains the ribosomal catalytic site termed the peptidyl transferase center (PTC), which catalyzes the formation of peptide bonds, thereby polymerizing the amino acids delivered by tRNAs into a polypeptide chain. The nascent polypeptides leave the ribosome through a tunnel in the LSU and interact with protein factors that function in enzymatic processing, targeting, and the membrane insertion of nascent chains at the exit of the ribosomal tunnel. uS11 is involved in nucleolar processing of pre-18S ribosomal RNA and ribosome assembly. This Saccharomyces cerevisiae (strain ATCC 204508 / S288c) (Baker's yeast) protein is Small ribosomal subunit protein uS11B.